The primary structure comprises 286 residues: uncharacterized protein (286 aa).

Residues 2-221 (VDGMKHLILK…PIYIKNLQKR (220 aa)) form the Radical SAM core domain. Positions 16, 20, and 23 each coordinate [4Fe-4S] cluster.

Belongs to the radical SAM superfamily. Anaerobic sulfatase-maturating enzyme family. [4Fe-4S] cluster serves as cofactor.

This is an uncharacterized protein from Methanocaldococcus jannaschii (strain ATCC 43067 / DSM 2661 / JAL-1 / JCM 10045 / NBRC 100440) (Methanococcus jannaschii).